The chain runs to 201 residues: Thymidylate kinase (201 aa).

Residue 7-14 coordinates ATP; sequence GGEGSGKT.

The protein belongs to the thymidylate kinase family.

It catalyses the reaction dTMP + ATP = dTDP + ADP. Phosphorylation of dTMP to form dTDP in both de novo and salvage pathways of dTTP synthesis. This chain is Thymidylate kinase, found in Acholeplasma laidlawii (strain PG-8A).